The following is a 109-amino-acid chain: Phosphoribosyl-ATP pyrophosphatase (109 aa).

Belongs to the PRA-PH family.

Its subcellular location is the cytoplasm. The enzyme catalyses 1-(5-phospho-beta-D-ribosyl)-ATP + H2O = 1-(5-phospho-beta-D-ribosyl)-5'-AMP + diphosphate + H(+). Its pathway is amino-acid biosynthesis; L-histidine biosynthesis; L-histidine from 5-phospho-alpha-D-ribose 1-diphosphate: step 2/9. The sequence is that of Phosphoribosyl-ATP pyrophosphatase from Parvibaculum lavamentivorans (strain DS-1 / DSM 13023 / NCIMB 13966).